We begin with the raw amino-acid sequence, 514 residues long: Maturase K (514 aa).

This sequence belongs to the intron maturase 2 family. MatK subfamily.

It is found in the plastid. The protein localises to the chloroplast. Usually encoded in the trnK tRNA gene intron. Probably assists in splicing its own and other chloroplast group II introns. The polypeptide is Maturase K (Acer monspessulanum (Montpellier maple)).